Reading from the N-terminus, the 216-residue chain is MTKKYSLGFVGRKAGMSRVFTEDGRSVPVTLIEATPNRIAQIKTVEVDGYSAVQVTVGARRAALVNKPAAGHFAKAKVEAGRGLWEFRVEDAQLGDFAVGGEIKADIFEVGQKVDVQGVTKGKGFQGTIKRYNFRMGDATHGNSLSHRAPGSLGQRQTPGRVFPGKKMSGHMGAVQQSTQNLEVVKVDVERGLIAIRGAVPGAAGGDVIVRPASKA.

N5-methylglutamine is present on glutamine 157.

This sequence belongs to the universal ribosomal protein uL3 family. In terms of assembly, part of the 50S ribosomal subunit. Forms a cluster with proteins L14 and L19. Post-translationally, methylated by PrmB.

Its function is as follows. One of the primary rRNA binding proteins, it binds directly near the 3'-end of the 23S rRNA, where it nucleates assembly of the 50S subunit. This Xanthomonas axonopodis pv. citri (strain 306) protein is Large ribosomal subunit protein uL3.